The sequence spans 459 residues: Alcohol acyl transferase 2 (459 aa).

Catalysis depends on proton acceptor residues histidine 164 and asparagine 385.

Belongs to the plant acyltransferase family. As to expression, highly expressed in the cortex and skin of ripe fruit.

Its function is as follows. Involved in the biosynthesis of volatile esters which confer ripe apple fruit flavor. Alcohol acyl transferase that can use a wide range of alcohols as substrate to produce esters. The sequence is that of Alcohol acyl transferase 2 from Malus domestica (Apple).